A 367-amino-acid chain; its full sequence is MKSSTFGMLALAAAAKLVSAHATVHAVWINDVDQGEGNSESGYIRSPPSNSPITDVTSKDMTCNVNNKATAKTLEVKAGDKITFEWHHDSRSDSDDIIASSHKGPIMVYMAPTEKGTAGNGWVKIAEDGYTDGTWAVDTLIKNRGKHSVTVPDVAAGEYLFRPEIIALHEGNRQGGAQFYMECVQVKVTSSGSKTLPEGVSIPGAYTATDKGILFDIYNSFDSYPFPGPAVWDGASGSSSSPSASASASAPAATSAAPAPSSFTTIAKQPATSSTEAPSTENTSTTSTIVSTTAAASATAPATPSSTSAIASSAASTNSVPQPSSNAGGAVKEWYQCGGLNYKGSTQCEEGLTCKKWNPYYYQCISA.

A signal peptide spans 1-20; it reads MKSSTFGMLALAAAAKLVSA. Histidine 21 provides a ligand contact to Cu(2+). Positions 37-56 are disordered; that stretch reads GNSESGYIRSPPSNSPITDV. A disulfide bridge connects residues cysteine 63 and cysteine 183. Residue histidine 102 coordinates Cu(2+). Histidine 169 is a binding site for O2. A Cu(2+)-binding site is contributed by tyrosine 180. Positions 234–287 are disordered; sequence GASGSSSSPSASASASAPAATSAAPAPSSFTTIAKQPATSSTEAPSTENTSTTS. Composition is skewed to low complexity over residues 235–262 and 270–287; these read ASGS…APSS and PATS…STTS. Asparagine 282 carries an N-linked (GlcNAc...) asparagine glycan. One can recognise a CBM1 domain in the interval 329–365; that stretch reads GAVKEWYQCGGLNYKGSTQCEEGLTCKKWNPYYYQCI.

Belongs to the polysaccharide monooxygenase AA9 family. It depends on Cu(2+) as a cofactor.

Its subcellular location is the secreted. It catalyses the reaction [(1-&gt;4)-beta-D-glucosyl]n+m + reduced acceptor + O2 = 4-dehydro-beta-D-glucosyl-[(1-&gt;4)-beta-D-glucosyl]n-1 + [(1-&gt;4)-beta-D-glucosyl]m + acceptor + H2O.. In terms of biological role, lytic polysaccharide monooxygenase (LPMO) that depolymerizes crystalline and amorphous polysaccharides via the oxidation of scissile alpha- or beta-(1-4)-glycosidic bonds, yielding C4 oxidation products. Catalysis by LPMOs requires the reduction of the active-site copper from Cu(II) to Cu(I) by a reducing agent and H(2)O(2) or O(2) as a cosubstrate. Active on cellulose and cello-oligosaccharides, as well as plant cell wall-derived hemicellulosic polysaccharides. Also active on cello-oligosaccharides such as cellohexaose, cellopentaose or cellotetraose. In Aspergillus oryzae (strain ATCC 42149 / RIB 40) (Yellow koji mold), this protein is AA9 family lytic polysaccharide monooxygenase A.